Consider the following 151-residue polypeptide: Anti-CBASS protein Acb1 (151 aa).

A 3',3'-cGAMP-binding site is contributed by tyrosine 13. Tyrosine 13 contacts 3',3'-cUAMP. Active-site residues include histidine 45 and threonine 47. Position 108 (tyrosine 108) interacts with 3',3'-cGAMP. Residue tyrosine 108 participates in 3',3'-cUAMP binding. Catalysis depends on residues histidine 114 and threonine 116. Residues glutamate 140 and tryptophan 146 each contribute to the 3',3'-cGAMP site. 3',3'-cUAMP contacts are provided by glutamate 140 and tryptophan 146.

The protein belongs to the anti-CBASS protein Acb1 family.

The enzyme catalyses 3',3'-cUAMP + H2O = U[3'-5']pAp[3'] + H(+). The catalysed reaction is 3',3',3'-c-tri-AMP + H2O = A[3'-5']pA[3'-5']pAp[3'] + H(+). It carries out the reaction 3',3',3'-cAAG + H2O = G[3'-5']pA[3'-5']pAp[3'] + H(+). It catalyses the reaction 3',3',3'-cAAG + H2O = A[3'-5']pG[3'-5']pAp[3'] + H(+). The enzyme catalyses 3',3'-cGAMP + H2O = G[3'-5']pAp[3'] + H(+). In terms of biological role, counteracts the host CBASS antiviral defense system. Phosphodiesterase that enables metal-independent hydrolysis of the host cyclic di- and trinucleotide CBASS signals such as 3'3'-cGAMP, 3'3'cUA, and 3'3'3'-cAAA. Does not cleave cGG or cA4. Besides evasion of the CBASS system, might also enable evasion of the type III CRISPR systems that use cA3 signals. This chain is Anti-CBASS protein Acb1, found in Vibrio phage KVP40 (isolate Vibrio parahaemolyticus/Japan/Matsuzaki/1991) (KVP40).